The chain runs to 557 residues: Urocanate hydratase (557 aa).

The disordered stretch occupies residues 1–20 (MSNPRHNEREVRSPRGDELN). NAD(+) contacts are provided by residues 52–53 (GG), glutamine 130, 176–178 (GMG), glutamate 196, arginine 201, 242–243 (NA), 263–267 (QTSAH), 273–274 (YL), and tyrosine 322. The active site involves cysteine 410. Position 492 (glycine 492) interacts with NAD(+).

This sequence belongs to the urocanase family. It depends on NAD(+) as a cofactor.

Its subcellular location is the cytoplasm. The enzyme catalyses 4-imidazolone-5-propanoate = trans-urocanate + H2O. It functions in the pathway amino-acid degradation; L-histidine degradation into L-glutamate; N-formimidoyl-L-glutamate from L-histidine: step 2/3. In terms of biological role, catalyzes the conversion of urocanate to 4-imidazolone-5-propionate. In Brucella anthropi (strain ATCC 49188 / DSM 6882 / CCUG 24695 / JCM 21032 / LMG 3331 / NBRC 15819 / NCTC 12168 / Alc 37) (Ochrobactrum anthropi), this protein is Urocanate hydratase.